A 408-amino-acid polypeptide reads, in one-letter code: Zinc chaperone AztD (408 aa).

The N-terminal stretch at 1 to 21 (MLRHLAGASALALTLAGAGFA) is a signal peptide. Residues 23-29 (DHDHDHE) carry the N-terminal Zn(2+)-binding motif; binds a third Zn(2+) with low affinity motif. The Zn(2+) site is built by H99, H102, D104, H124, H167, H218, and H408. A disulfide bond links C214 and C231.

As to quaternary structure, monomer.

It is found in the periplasm. Its function is as follows. Acts as a zinc chaperone in the AztABCD zinc transport system. Directly transfers one zinc cation to the solute binding protein AztC; the transfer occurs without the formation of a stable interaction. Binds 3 Zn(2+), two with high affinity and one with low affinity, and transfers only Zn(2+) bound to site 2 to AztC. Likely functions to store zinc in the periplasm and may be important for zinc accumulation in zinc-limited environments. In Paracoccus denitrificans (strain Pd 1222), this protein is Zinc chaperone AztD.